The following is a 312-amino-acid chain: Aspartoacylase (312 aa).

Zn(2+) contacts are provided by His-20 and Glu-23. Residues Arg-62, Asn-69, and Arg-70 each coordinate N-acetyl-L-aspartate. His-115 provides a ligand contact to Zn(2+). The N-acetyl-L-aspartate site is built by Tyr-163 and Arg-167. The Proton donor/acceptor role is filled by Glu-177. Tyr-287 lines the N-acetyl-L-aspartate pocket.

It belongs to the AspA/AstE family. Aspartoacylase subfamily. Homodimer. It depends on Zn(2+) as a cofactor.

The protein resides in the cytoplasm. The protein localises to the nucleus. It catalyses the reaction an N-acyl-L-aspartate + H2O = a carboxylate + L-aspartate. It carries out the reaction N-acetyl-L-aspartate + H2O = L-aspartate + acetate. Functionally, catalyzes the deacetylation of N-acetylaspartic acid (NAA) to produce acetate and L-aspartate. NAA occurs in high concentration in brain and its hydrolysis NAA plays a significant part in the maintenance of intact white matter. In other tissues it acts as a scavenger of NAA from body fluids. The sequence is that of Aspartoacylase from Mus musculus (Mouse).